A 145-amino-acid polypeptide reads, in one-letter code: Putative BCoR-like protein 2 (145 aa).

A compositionally biased stretch (basic and acidic residues) spans 1 to 27; that stretch reads MKEKLSKKRAEVKGNRSWLEEFLKPSD. The segment at 1 to 58 is disordered; sequence MKEKLSKKRAEVKGNRSWLEEFLKPSDNEEGPPPKNKVLSNNASSQKPTHSSCIPLLR. Residues 38-52 show a composition bias toward polar residues; sequence VLSNNASSQKPTHSS.

The protein belongs to the BCOR family.

This is Putative BCoR-like protein 2 (BCORP1) from Homo sapiens (Human).